The following is a 473-amino-acid chain: Ribosomal RNA small subunit methyltransferase F (473 aa).

S-adenosyl-L-methionine contacts are provided by residues 123 to 129 (AAAPGSK), Glu147, Asp174, and Asp192. The active-site Nucleophile is Cys245.

The protein belongs to the class I-like SAM-binding methyltransferase superfamily. RsmB/NOP family.

It localises to the cytoplasm. The catalysed reaction is cytidine(1407) in 16S rRNA + S-adenosyl-L-methionine = 5-methylcytidine(1407) in 16S rRNA + S-adenosyl-L-homocysteine + H(+). Specifically methylates the cytosine at position 1407 (m5C1407) of 16S rRNA. This Vibrio cholerae serotype O1 (strain ATCC 39315 / El Tor Inaba N16961) protein is Ribosomal RNA small subunit methyltransferase F.